Consider the following 431-residue polypeptide: Ornithine decarboxylase (431 aa).

Lys94 is modified (N6-(pyridoxal phosphate)lysine). Pyridoxal 5'-phosphate contacts are provided by residues Ser226, Gly264, and 297 to 300 (EPGR). 340–341 (YD) serves as a coordination point for substrate. Catalysis depends on Cys376, which acts as the Proton donor; shared with dimeric partner. Residue Asp377 participates in substrate binding. Tyr405 contributes to the pyridoxal 5'-phosphate binding site.

The protein belongs to the Orn/Lys/Arg decarboxylase class-II family. As to quaternary structure, homodimer. Only the dimer is catalytically active, as the active sites are constructed of residues from both monomers. Pyridoxal 5'-phosphate is required as a cofactor.

The enzyme catalyses L-ornithine + H(+) = putrescine + CO2. Its pathway is amine and polyamine biosynthesis; putrescine biosynthesis via L-ornithine pathway; putrescine from L-ornithine: step 1/1. Its activity is regulated as follows. Inhibited by antizyme (AZ) in response to polyamine levels. AZ inhibits the assembly of the functional homodimer by binding to ODC monomers and targeting them for ubiquitin-independent proteolytic destruction by the 26S proteasome. Functionally, catalyzes the first and rate-limiting step of polyamine biosynthesis that converts ornithine into putrescine, which is the precursor for the polyamines, spermidine and spermine. Polyamines are essential for cell proliferation and are implicated in cellular processes, ranging from DNA replication to apoptosis. The sequence is that of Ornithine decarboxylase from Datura stramonium (Jimsonweed).